The sequence spans 329 residues: Sex comb on midleg-like protein 1 (329 aa).

Residues 125–194 (NEVHESFSYP…SDFSEHNYQP (70 aa)) form a disordered region. The residue at position 138 (Ser138) is a Phosphoserine. Residues 159–168 (FRMEEYQRAE) are compositionally biased toward basic and acidic residues. Phosphoserine is present on Ser238. The region spanning 258–325 (WSVEAVVLFL…YYIDRLKQGK (68 aa)) is the SAM domain.

The protein belongs to the SCM family. As to expression, highly expressed in testis and pancreas. Preferentially expressed in the germ stem cells of testis.

It localises to the nucleus. Putative Polycomb group (PcG) protein. PcG proteins act by forming multiprotein complexes, which are required to maintain the transcriptionally repressive state of homeotic genes throughout development. May be involved in spermatogenesis during sexual maturation. The sequence is that of Sex comb on midleg-like protein 1 (SCML1) from Macaca mulatta (Rhesus macaque).